We begin with the raw amino-acid sequence, 420 residues long: Glutaryl-CoA dehydrogenase, mitochondrial (420 aa).

Residue Arg125–Ser126 participates in substrate binding. FAD-binding positions include Phe164–Thr167, Ser173, and Trp198–Thr200. Ser173 is a substrate binding site. Residues Phe273–Asn277 and Arg280 contribute to the substrate site. The active-site Proton acceptor is Glu400. 2 residues coordinate FAD: Thr402 and Phe420.

It belongs to the acyl-CoA dehydrogenase family. FAD serves as cofactor.

The protein localises to the mitochondrion matrix. It carries out the reaction glutaryl-CoA + oxidized [electron-transfer flavoprotein] + 2 H(+) = (2E)-butenoyl-CoA + reduced [electron-transfer flavoprotein] + CO2. The protein operates within amino-acid metabolism; lysine degradation. Its pathway is amino-acid metabolism; tryptophan metabolism. The polypeptide is Glutaryl-CoA dehydrogenase, mitochondrial (gcdh) (Dictyostelium discoideum (Social amoeba)).